The following is a 985-amino-acid chain: MDRLNNVGGETERELDEKYPNRPRNKHSTLPFHDLFLTLFNPLNGNKKRPTGPAAARKKLGPHGGQQTLSPQELRRDIIQRFISRWRKEVGNDIYPAFRLIIPEKDRDRAMYGLKEKTIGKLLVKIMKIDKNSEDGFNLLNWKLPGQSMASRMAGDFAGRCYEVISKRPIRTDVGNMTIQEVNDKLDVLAATSKEDEQIPVLEEFYRNMNPEELMWLIRIILRQMKVGATERTFFEIWHPDAESLFSISSSLRRVCWELYDPNVRLEADEARVTLMQCFQPQLAQFQMHSFPKMIERMRLSPDDPTFWIEEKLDGERIQLHMMSDDSIPGGKRFGFWSRKAKDYTYLYGNGFYDENGALTRHLKDAFADGVDNIILDGEMITWDPEQDAPLPFGTLKTAALSEQRNPFSATGQRPLFRIFDILYLNDKALTRYTLRDRRRALEASIKPVHRRLEVHTYEIGNSAADIEPQLRKVVAEASEGLVLKNPNSPYRLNDRHDDWMKVKPEYMTEFGESLDCVVIGGYYGSGKRGGGLASFLCGLRVDEAQVRQGASPMKCYSFLKVGGGFTAPDYANIRHHTDGKWKDWNPKKPPTEFIELAGGDAQYERPDVWIRPDESVVLCVKAASVTPSDQFRLGLTVRFPRFKRLRMDKDWKSALSIQEFMDLKANAEREQKEKEFKIDNSRRKRAKRAVKKPLTIAGYDESKRAGFTGPSGHVFEGMNFFVITDSVEPEKKSKLELEQLIKANGGKIYQTHTAAPNTLCIAERRTVKVASVQKVAKESIIRPSWLFDCIKQNEVDKGLPDLLIPFEPRHMYFTVKSQEEEIARHVDEYSDSYARDITPNELSKLLVSMPLIPNLPPPHISKTETQIQERESTFQELRGWLFKNQVLHFVKRRSDSMLSLPLRLASNLARFAGASVANELEDKSITHVVIDTDSQPADVSALRSAISKRVAAGRRIPHLVTIAWIQDSWKAESLLDEERFAPTA.

Disordered stretches follow at residues 1–27 (MDRL…RNKH) and 43–70 (LNGN…QTLS). The span at 10–20 (ETERELDEKYP) shows a compositional bias: basic and acidic residues. The segment covering 46–61 (NKKRPTGPAAARKKLG) has biased composition (basic residues). Positions 310, 312, 313, 317, 379, 420, 480, 485, 502, and 504 each coordinate ATP. Lys-312 serves as the catalytic N6-AMP-lysine intermediate. Residue Glu-379 participates in Mg(2+) binding. Glu-480 contributes to the Mg(2+) binding site. 2 BRCT domains span residues 711–804 (PSGH…PDLL) and 878–983 (LRGW…RFAP).

This sequence belongs to the ATP-dependent DNA ligase family. Requires Mg(2+) as cofactor.

Its subcellular location is the nucleus. The enzyme catalyses ATP + (deoxyribonucleotide)n-3'-hydroxyl + 5'-phospho-(deoxyribonucleotide)m = (deoxyribonucleotide)n+m + AMP + diphosphate.. Functionally, DNA ligase involved in DNA non-homologous end joining (NHEJ); required for double-strand break (DSB) repair. The sequence is that of DNA ligase 4 (LIG4) from Coccidioides immitis (strain RS) (Valley fever fungus).